A 1052-amino-acid polypeptide reads, in one-letter code: Eukaryotic translation initiation factor 3 subunit A (1052 aa).

Positions 325 to 505 (IQYAASAVLL…GSLHFNNNIF (181 aa)) constitute a PCI domain. Coiled coils occupy residues 568-712 (REHV…RLRE) and 769-882 (EKTA…SAQT). 2 stretches are compositionally biased toward basic and acidic residues: residues 570–600 (HVSN…EQMQ) and 793–874 (KIRL…EQEK). Disordered stretches follow at residues 570–606 (HVSN…HQNQ) and 793–1052 (KIRL…DDKN). Polar residues-rich tracts occupy residues 875–887 (LSNL…QPTW) and 895–906 (APTTAAPSSMRV). Composition is skewed to basic and acidic residues over residues 942–952 (DRGDRAPRDTG), 960–970 (DRGDRAPRDTG), 979–1013 (RAPR…ERRA), and 1037–1052 (GSER…DDKN).

This sequence belongs to the eIF-3 subunit A family. In terms of assembly, component of the eukaryotic translation initiation factor 3 (eIF-3) complex.

Its subcellular location is the cytoplasm. Functionally, RNA-binding component of the eukaryotic translation initiation factor 3 (eIF-3) complex, which is involved in protein synthesis of a specialized repertoire of mRNAs and, together with other initiation factors, stimulates binding of mRNA and methionyl-tRNAi to the 40S ribosome. The eIF-3 complex specifically targets and initiates translation of a subset of mRNAs involved in cell proliferation. This chain is Eukaryotic translation initiation factor 3 subunit A, found in Monosiga brevicollis (Choanoflagellate).